The chain runs to 1296 residues: Phosphoribosylformylglycinamidine synthase (1296 aa).

The interval 300–325 is disordered; the sequence is APFSGAATGSGGEIRDEGATGRGSKP. Residues 304 to 315 and A675 each bind ATP; that span reads GAATGSGGEIRD. Mg(2+) contacts are provided by E715, N719, and D885. Residue S887 coordinates ATP. The 254-residue stretch at 1043-1296 folds into the Glutamine amidotransferase type-1 domain; sequence MAILREQGVN…MFRNARKNVG (254 aa). C1136 acts as the Nucleophile in catalysis. A disordered region spans residues 1232–1253; that stretch reads TQYPANPNGSPEGITGITSTDG. Active-site residues include H1261 and E1263.

In the N-terminal section; belongs to the FGAMS family. In terms of assembly, monomer.

The protein localises to the cytoplasm. It carries out the reaction N(2)-formyl-N(1)-(5-phospho-beta-D-ribosyl)glycinamide + L-glutamine + ATP + H2O = 2-formamido-N(1)-(5-O-phospho-beta-D-ribosyl)acetamidine + L-glutamate + ADP + phosphate + H(+). It participates in purine metabolism; IMP biosynthesis via de novo pathway; 5-amino-1-(5-phospho-D-ribosyl)imidazole from N(2)-formyl-N(1)-(5-phospho-D-ribosyl)glycinamide: step 1/2. Its function is as follows. Phosphoribosylformylglycinamidine synthase involved in the purines biosynthetic pathway. Catalyzes the ATP-dependent conversion of formylglycinamide ribonucleotide (FGAR) and glutamine to yield formylglycinamidine ribonucleotide (FGAM) and glutamate. This chain is Phosphoribosylformylglycinamidine synthase, found in Pseudoalteromonas translucida (strain TAC 125).